Here is a 632-residue protein sequence, read N- to C-terminus: Tail spike protein (632 aa).

Residues 505 to 630 enclose the Peptidase S74 domain; sequence SDARCKTEPL…KRMQEALAAL (126 aa).

Homotrimer. Post-translationally, proteolytic cleavage and release of the chaperone in the host cytosol stabilizes the folded protein. The cleavage gives rise to the mature tail spike protein but is not essential for catalytic activity.

It is found in the virion. Functionally, functions as a receptor binding protein (RBP) and probably mediates the attachment to the host capsular exopolysaccharides. Displays a depolymerase activity that specifically degrades the K5-type polysaccharides of Escherichia coli capsule. Its function is as follows. The C-terminal chaperone protein mediates homotrimerization and proper folding of the catalytic trimer. This is Tail spike protein (kflA) from Escherichia virus K5 (Bacteriophage K5).